The primary structure comprises 401 residues: 1-deoxy-D-xylulose 5-phosphate reductoisomerase (401 aa).

The NADPH site is built by threonine 10, glycine 11, serine 12, isoleucine 13, asparagine 38, and asparagine 124. A 1-deoxy-D-xylulose 5-phosphate-binding site is contributed by lysine 125. Glutamate 126 contacts NADPH. Position 150 (aspartate 150) interacts with Mn(2+). Residues serine 151, glutamate 152, serine 186, and histidine 209 each coordinate 1-deoxy-D-xylulose 5-phosphate. Glutamate 152 is a binding site for Mn(2+). Glycine 215 lines the NADPH pocket. Serine 222, asparagine 227, lysine 228, and glutamate 231 together coordinate 1-deoxy-D-xylulose 5-phosphate. Glutamate 231 is a Mn(2+) binding site.

The protein belongs to the DXR family. Mg(2+) is required as a cofactor. The cofactor is Mn(2+).

It carries out the reaction 2-C-methyl-D-erythritol 4-phosphate + NADP(+) = 1-deoxy-D-xylulose 5-phosphate + NADPH + H(+). The protein operates within isoprenoid biosynthesis; isopentenyl diphosphate biosynthesis via DXP pathway; isopentenyl diphosphate from 1-deoxy-D-xylulose 5-phosphate: step 1/6. Its function is as follows. Catalyzes the NADPH-dependent rearrangement and reduction of 1-deoxy-D-xylulose-5-phosphate (DXP) to 2-C-methyl-D-erythritol 4-phosphate (MEP). In Vibrio campbellii (strain ATCC BAA-1116), this protein is 1-deoxy-D-xylulose 5-phosphate reductoisomerase.